The following is a 194-amino-acid chain: Fe/S biogenesis protein NfuA (194 aa).

The [4Fe-4S] cluster site is built by Cys-152 and Cys-155.

This sequence belongs to the NfuA family. As to quaternary structure, homodimer. It depends on [4Fe-4S] cluster as a cofactor.

Involved in iron-sulfur cluster biogenesis. Binds a 4Fe-4S cluster, can transfer this cluster to apoproteins, and thereby intervenes in the maturation of Fe/S proteins. Could also act as a scaffold/chaperone for damaged Fe/S proteins. This Teredinibacter turnerae (strain ATCC 39867 / T7901) protein is Fe/S biogenesis protein NfuA.